The following is a 239-amino-acid chain: Dihydromethanopterin reductase (acceptor) (239 aa).

4Fe-4S ferredoxin-type domains are found at residues 144–175 (MPYN…EKNG) and 176–205 (VTDQ…GGPV). [4Fe-4S] cluster contacts are provided by Cys-153, Cys-156, Cys-159, Cys-165, Cys-185, Cys-188, Cys-191, and Cys-195.

As to quaternary structure, homodimer. [4Fe-4S] cluster is required as a cofactor.

The catalysed reaction is 5,6,7,8-tetrahydromethanopterin + A = 7,8-dihydromethanopterin + AH2. It participates in cofactor biosynthesis; 5,6,7,8-tetrahydromethanopterin biosynthesis. Functionally, involved in the biosynthesis of tetrahydromethanopterin, a coenzyme used in methanogenesis. Catalyzes the reduction of dihydromethanopterin (H(2)MPT) to tetrahydromethanopterin (H(4)MPT). Ferredoxin may serve as an electron donor. The sequence is that of Dihydromethanopterin reductase (acceptor) from Methanosarcina mazei (strain ATCC BAA-159 / DSM 3647 / Goe1 / Go1 / JCM 11833 / OCM 88) (Methanosarcina frisia).